The following is a 706-amino-acid chain: Polyribonucleotide nucleotidyltransferase (706 aa).

Mg(2+) contacts are provided by Asp-485 and Asp-491. One can recognise a KH domain in the interval 552 to 611; sequence PRMLKMKIHPDKIREVIGSGGKTINKIIEDTGVKIDIENDGTIFIAAQTQEAGELALSII. The S1 motif domain maps to 621–689; the sequence is GDIFKGKVIK…QQGKVSLSRK (69 aa).

It belongs to the polyribonucleotide nucleotidyltransferase family. It depends on Mg(2+) as a cofactor.

The protein localises to the cytoplasm. It catalyses the reaction RNA(n+1) + phosphate = RNA(n) + a ribonucleoside 5'-diphosphate. Its function is as follows. Involved in mRNA degradation. Catalyzes the phosphorolysis of single-stranded polyribonucleotides processively in the 3'- to 5'-direction. This is Polyribonucleotide nucleotidyltransferase from Alkaliphilus oremlandii (strain OhILAs) (Clostridium oremlandii (strain OhILAs)).